A 266-amino-acid chain; its full sequence is 4-hydroxy-tetrahydrodipicolinate reductase (266 aa).

G10–M15 serves as a coordination point for NAD(+). K38 lines the NADP(+) pocket. Residues G99 to T101 and A125 to F128 each bind NAD(+). Residue H155 is the Proton donor/acceptor of the active site. A (S)-2,3,4,5-tetrahydrodipicolinate-binding site is contributed by H156. K159 acts as the Proton donor in catalysis. Position 165 to 166 (G165 to T166) interacts with (S)-2,3,4,5-tetrahydrodipicolinate.

Belongs to the DapB family.

It localises to the cytoplasm. The enzyme catalyses (S)-2,3,4,5-tetrahydrodipicolinate + NAD(+) + H2O = (2S,4S)-4-hydroxy-2,3,4,5-tetrahydrodipicolinate + NADH + H(+). It catalyses the reaction (S)-2,3,4,5-tetrahydrodipicolinate + NADP(+) + H2O = (2S,4S)-4-hydroxy-2,3,4,5-tetrahydrodipicolinate + NADPH + H(+). It participates in amino-acid biosynthesis; L-lysine biosynthesis via DAP pathway; (S)-tetrahydrodipicolinate from L-aspartate: step 4/4. Its function is as follows. Catalyzes the conversion of 4-hydroxy-tetrahydrodipicolinate (HTPA) to tetrahydrodipicolinate. The protein is 4-hydroxy-tetrahydrodipicolinate reductase of Bacillus cereus (strain ATCC 10987 / NRS 248).